Here is a 346-residue protein sequence, read N- to C-terminus: L-threonine dehydratase catabolic TdcB (346 aa).

59 to 60 (FT) is an AMP binding site. At lysine 64 the chain carries N6-(pyridoxal phosphate)lysine. Residues glutamine 94, 125–126 (GY), and asparagine 321 contribute to the AMP site.

It belongs to the serine/threonine dehydratase family. As to quaternary structure, in the native structure, TdcB is in a dimeric form, whereas in the TdcB-AMP complex, it exists in a tetrameric form (dimer of dimers). The cofactor is pyridoxal 5'-phosphate.

The enzyme catalyses L-threonine = 2-oxobutanoate + NH4(+). It functions in the pathway amino-acid degradation; L-threonine degradation via propanoate pathway; propanoate from L-threonine: step 1/4. Each protein molecule can bind up to four molecules of AMP, which act as an allosteric activator to the enzyme. Catalyzes the anaerobic formation of alpha-ketobutyrate and ammonia from threonine in a two-step reaction. The first step involved a dehydration of threonine and a production of enamine intermediates (aminocrotonate), which tautomerizes to its imine form (iminobutyrate). Both intermediates are unstable and short-lived. The second step is the nonenzymatic hydrolysis of the enamine/imine intermediates to form 2-ketobutyrate and free ammonia. In the low water environment of the cell, the second step is accelerated by RidA. The polypeptide is L-threonine dehydratase catabolic TdcB (tdcB) (Staphylococcus aureus (strain bovine RF122 / ET3-1)).